A 262-amino-acid polypeptide reads, in one-letter code: LysM and putative peptidoglycan-binding domain-containing protein 3 (262 aa).

Topologically, residues M1–G218 are extracellular. The LysM domain maps to I70 to I114. Residues W219–L239 form a helical membrane-spanning segment. Topologically, residues Y240–S262 are cytoplasmic.

It localises to the cell membrane. The protein resides in the golgi apparatus. Its function is as follows. Essential for Golgi structural integrity. This chain is LysM and putative peptidoglycan-binding domain-containing protein 3 (lysmd3), found in Xenopus tropicalis (Western clawed frog).